We begin with the raw amino-acid sequence, 976 residues long: Mast/stem cell growth factor receptor Kit (976 aa).

The first 25 residues, 1-25 (MRGARGAWDFLCVLLLLLRVQTGSS), serve as a signal peptide directing secretion. Residues 26 to 524 (QPSVSPGEPS…QIHPHTLFTP (499 aa)) lie on the Extracellular side of the membrane. 5 Ig-like C2-type domains span residues 27 to 112 (PSVS…VFVR), 121 to 205 (DRSL…LKVR), 212 to 308 (PVVS…LEVV), 317 to 410 (PMIN…VYVN), and 413 to 507 (PEIL…FNFA). Cys58 and Cys97 form a disulfide bridge. N-linked (GlcNAc...) asparagine glycosylation is found at Asn130 and Asn145. 3 cysteine pairs are disulfide-bonded: Cys136/Cys186, Cys151/Cys183, and Cys233/Cys290. Residues Asn283, Asn293, Asn300, Asn320, Asn352, Asn367, Asn463, and Asn486 are each glycosylated (N-linked (GlcNAc...) asparagine). Cys428 and Cys491 are oxidised to a cystine. The helical transmembrane segment at 525–545 (LLIGFVIVAGMMCIIVMILTY) threads the bilayer. Residues 546-976 (KYLQKPMYEV…SQPLLVHDDV (431 aa)) lie on the Cytoplasmic side of the membrane. A phosphotyrosine; by autocatalysis mark is found at Tyr547, Tyr553, Tyr568, and Tyr570. Residue Tyr568 coordinates Mg(2+). The segment at 568 to 570 (YVY) is important for interaction with phosphotyrosine-binding proteins. A Protein kinase domain is found at 589–937 (LSFGKTLGAG…ISESTNHIYS (349 aa)). Residues 596–603 (GAGAFGKV), Lys623, and 671–677 (EYCCYGD) contribute to the ATP site. A phosphotyrosine; by autocatalysis mark is found at Tyr703, Tyr721, and Tyr730. Residues Ser741 and Ser746 each carry the phosphoserine; by PKC/PRKCA modification. Asp792 serves as the catalytic Proton acceptor. Arg796 contacts ATP. Mg(2+) contacts are provided by Asn797 and Asp810. Ser821 is modified (phosphoserine). Tyr823 is modified (phosphotyrosine; by autocatalysis). A Phosphoserine modification is found at Ser891. 2 positions are modified to phosphotyrosine; by autocatalysis: Tyr900 and Tyr936. A Phosphoserine modification is found at Ser959.

This sequence belongs to the protein kinase superfamily. Tyr protein kinase family. CSF-1/PDGF receptor subfamily. In terms of assembly, monomer in the absence of bound KITLG/SCF. Homodimer in the presence of bound KITLG/SCF, forming a heterotetramer with two KITLG/SCF molecules. Interacts (via phosphorylated tyrosine residues) with the adapter proteins GRB2 and GRB7 (via SH2 domain), and SH2B2/APS. Interacts (via C-terminus) with MPDZ (via the tenth PDZ domain). Interacts (via phosphorylated tyrosine residues) with PIK3R1 and PIK3 catalytic subunit. Interacts (via phosphorylated tyrosine) with CRK (isoform Crk-II), FYN, SHC1 and MATK/CHK (via SH2 domain). Interacts with LYN and FES/FPS. Interacts (via phosphorylated tyrosine residues) with the protein phosphatases PTPN6/SHP-1 (via SH2 domain), PTPN11/SHP-2 (via SH2 domain) and PTPRU. Interacts with PLCG1. Interacts with DOK1 and TEC. Interacts (KITLG/SCF-bound) with IL1RL1. Interacts with IL1RAP (independent of stimulation with KITLG/SCF). A mast cell-specific KITLG/SCF-induced interleukin-33 signaling complex contains IL1RL1, IL1RAP, KIT and MYD88. In terms of processing, ubiquitinated by SOCS6. KIT is rapidly ubiquitinated after autophosphorylation induced by KITLG/SCF binding, leading to internalization and degradation. Post-translationally, autophosphorylated on tyrosine residues. KITLG/SCF binding enhances autophosphorylation. Isoform 1 shows low levels of tyrosine phosphorylation in the absence of added KITLG/SCF (in vitro). Kinase activity is down-regulated by phosphorylation on serine residues by protein kinase C family members. Phosphorylation at Tyr-568 is required for interaction with PTPN11/SHP-2, CRK (isoform Crk-II) and members of the SRC tyrosine-protein kinase family. Phosphorylation at Tyr-570 is required for interaction with PTPN6/SHP-1. Phosphorylation at Tyr-703, Tyr-823 and Tyr-936 is important for interaction with GRB2. Phosphorylation at Tyr-721 is important for interaction with PIK3R1. Phosphorylation at Tyr-823 and Tyr-936 is important for interaction with GRB7. In terms of tissue distribution, in testis, detected in spermatogonia in the basal layer and in interstitial Leydig cells but not in Sertoli cells or spermatocytes inside the seminiferous tubules (at protein level). Expression is maintained in ejaculated spermatozoa (at protein level).

The protein resides in the cell membrane. It is found in the cytoplasm. It carries out the reaction L-tyrosyl-[protein] + ATP = O-phospho-L-tyrosyl-[protein] + ADP + H(+). Present in an inactive conformation in the absence of bound ligand. KITLG/SCF binding leads to dimerization and activation by autophosphorylation on tyrosine residues. Activity is down-regulated by PRKCA-mediated phosphorylation on serine residues. Inhibited by imatinib/STI-571 (Gleevec) and sunitinib; these compounds maintain the kinase in an inactive conformation. Functionally, tyrosine-protein kinase that acts as a cell-surface receptor for the cytokine KITLG/SCF and plays an essential role in the regulation of cell survival and proliferation, hematopoiesis, stem cell maintenance, gametogenesis, mast cell development, migration and function, and in melanogenesis. In response to KITLG/SCF binding, KIT can activate several signaling pathways. Phosphorylates PIK3R1, PLCG1, SH2B2/APS and CBL. Activates the AKT1 signaling pathway by phosphorylation of PIK3R1, the regulatory subunit of phosphatidylinositol 3-kinase. Activated KIT also transmits signals via GRB2 and activation of RAS, RAF1 and the MAP kinases MAPK1/ERK2 and/or MAPK3/ERK1. Promotes activation of STAT family members STAT1, STAT3, STAT5A and STAT5B. Activation of PLCG1 leads to the production of the cellular signaling molecules diacylglycerol and inositol 1,4,5-trisphosphate. KIT signaling is modulated by protein phosphatases, and by rapid internalization and degradation of the receptor. Activated KIT promotes phosphorylation of the protein phosphatases PTPN6/SHP-1 and PTPRU, and of the transcription factors STAT1, STAT3, STAT5A and STAT5B. Promotes phosphorylation of PIK3R1, CBL, CRK (isoform Crk-II), LYN, MAPK1/ERK2 and/or MAPK3/ERK1, PLCG1, SRC and SHC1. This chain is Mast/stem cell growth factor receptor Kit (KIT), found in Homo sapiens (Human).